The following is a 126-amino-acid chain: Small ribosomal subunit protein uS11 (126 aa).

The protein belongs to the universal ribosomal protein uS11 family. Part of the 30S ribosomal subunit.

Its function is as follows. Located on the platform of the 30S subunit. The chain is Small ribosomal subunit protein uS11 from Methanosarcina mazei (strain ATCC BAA-159 / DSM 3647 / Goe1 / Go1 / JCM 11833 / OCM 88) (Methanosarcina frisia).